The primary structure comprises 622 residues: Pyranose 2-oxidase (622 aa).

Positions 1–28 (MSASSSDPFHSFAKTSFTSKAAKRATAH) are cleaved as a signal peptide. A propeptide spanning residues 29 to 37 (SLPPLPGPG) is cleaved from the precursor. Position 167 is a tele-8alpha-FAD histidine (His-167). 2 residues coordinate substrate: Gln-449 and His-451. His-546 (proton acceptor) is an active-site residue. Asn-591 is a catalytic residue.

Belongs to the GMC oxidoreductase family. In terms of assembly, homotetramer. The cofactor is FAD.

The protein resides in the periplasm. It carries out the reaction D-glucose + O2 = 2-dehydro-D-glucose + H2O2. Its function is as follows. Catalyzes the oxidation of various aldopyranoses and disaccharides on carbon-2 to the corresponding 2-keto sugars concomitant with the reduction of O(2) to H(2)O(2). Plays an important role in lignin degradation of wood rot fungi by supplying the essential cosubstrate H(2)O(2) for the ligninolytic peroxidases, lignin peroxidase and manganese-dependent peroxidase. The preferred substrate is D-glucose which is converted to 2-dehydro-D-glucose, an intermediate of a secondary metabolic pathway leading to the antibiotic cortalcerone. Also acts on D-xylose, together with D-glucose the major sugars derived from wood, on L-sorbose, D-galactose and 1,5-anhydroglucitol, a diagnostic marker of diabetes mellitus. The chain is Pyranose 2-oxidase (P2OX) from Trametes hirsuta (White-rot fungus).